The following is a 449-amino-acid chain: Na(+)-translocating NADH-quinone reductase subunit A (449 aa).

This sequence belongs to the NqrA family. In terms of assembly, composed of six subunits; NqrA, NqrB, NqrC, NqrD, NqrE and NqrF.

It carries out the reaction a ubiquinone + n Na(+)(in) + NADH + H(+) = a ubiquinol + n Na(+)(out) + NAD(+). Functionally, NQR complex catalyzes the reduction of ubiquinone-1 to ubiquinol by two successive reactions, coupled with the transport of Na(+) ions from the cytoplasm to the periplasm. NqrA to NqrE are probably involved in the second step, the conversion of ubisemiquinone to ubiquinol. The chain is Na(+)-translocating NADH-quinone reductase subunit A from Actinobacillus pleuropneumoniae serotype 5b (strain L20).